We begin with the raw amino-acid sequence, 360 residues long: DNA replication and repair protein RecF (360 aa).

30-37 (GRNAQGKT) is an ATP binding site.

The protein belongs to the RecF family.

It localises to the cytoplasm. Its function is as follows. The RecF protein is involved in DNA metabolism; it is required for DNA replication and normal SOS inducibility. RecF binds preferentially to single-stranded, linear DNA. It also seems to bind ATP. The sequence is that of DNA replication and repair protein RecF from Desulforudis audaxviator (strain MP104C).